A 209-amino-acid chain; its full sequence is Ancillary SecYEG translocon subunit (209 aa).

At 1-23 the chain is on the cytoplasmic side; that stretch reads MAAHLEEQQELDNFKYFWKTTGK. A helical membrane pass occupies residues 24 to 42; it reads WLFALLILAALGYLGYTVY. The Periplasmic segment spans residues 43-209; sequence QNRAASQNQE…LLQMKLDSLK (167 aa). Residues 161–194 form a TPR repeat; that stretch reads PLLMETKGDVYAAQEKSQEALKNYGQALEKMPQD.

It belongs to the YfgM family. Interacts with the SecYEG translocon. Forms a complex with PpiD.

It localises to the cell inner membrane. Functionally, may mediate protein transfer from the SecYEG translocon to the periplasmic chaperone network via its periplasmic C-terminal region. The sequence is that of Ancillary SecYEG translocon subunit from Neisseria gonorrhoeae (strain ATCC 700825 / FA 1090).